The following is a 135-amino-acid chain: NAD(P)H-quinone oxidoreductase subunit 3 (135 aa).

3 consecutive transmembrane segments (helical) span residues 15 to 35 (LMFV…AAAV), 79 to 99 (MFAL…PWAV), and 104 to 124 (LGLL…VALA).

Belongs to the complex I subunit 3 family. As to quaternary structure, NDH-1 can be composed of about 15 different subunits; different subcomplexes with different compositions have been identified which probably have different functions.

It is found in the cellular thylakoid membrane. It catalyses the reaction a plastoquinone + NADH + (n+1) H(+)(in) = a plastoquinol + NAD(+) + n H(+)(out). The enzyme catalyses a plastoquinone + NADPH + (n+1) H(+)(in) = a plastoquinol + NADP(+) + n H(+)(out). NDH-1 shuttles electrons from an unknown electron donor, via FMN and iron-sulfur (Fe-S) centers, to quinones in the respiratory and/or the photosynthetic chain. The immediate electron acceptor for the enzyme in this species is believed to be plastoquinone. Couples the redox reaction to proton translocation, and thus conserves the redox energy in a proton gradient. Cyanobacterial NDH-1 also plays a role in inorganic carbon-concentration. This Synechococcus sp. (strain CC9311) protein is NAD(P)H-quinone oxidoreductase subunit 3.